The sequence spans 472 residues: Protein nucleotidyltransferase YdiU (472 aa).

ATP is bound by residues G86, G88, R89, K109, D121, G122, R172, and R179. D244 acts as the Proton acceptor in catalysis. Mg(2+) contacts are provided by N245 and D254. D254 is an ATP binding site.

Belongs to the SELO family. The cofactor is Mg(2+). It depends on Mn(2+) as a cofactor.

It carries out the reaction L-seryl-[protein] + ATP = 3-O-(5'-adenylyl)-L-seryl-[protein] + diphosphate. The enzyme catalyses L-threonyl-[protein] + ATP = 3-O-(5'-adenylyl)-L-threonyl-[protein] + diphosphate. The catalysed reaction is L-tyrosyl-[protein] + ATP = O-(5'-adenylyl)-L-tyrosyl-[protein] + diphosphate. It catalyses the reaction L-histidyl-[protein] + UTP = N(tele)-(5'-uridylyl)-L-histidyl-[protein] + diphosphate. It carries out the reaction L-seryl-[protein] + UTP = O-(5'-uridylyl)-L-seryl-[protein] + diphosphate. The enzyme catalyses L-tyrosyl-[protein] + UTP = O-(5'-uridylyl)-L-tyrosyl-[protein] + diphosphate. Its function is as follows. Nucleotidyltransferase involved in the post-translational modification of proteins. It can catalyze the addition of adenosine monophosphate (AMP) or uridine monophosphate (UMP) to a protein, resulting in modifications known as AMPylation and UMPylation. The protein is Protein nucleotidyltransferase YdiU of Ruegeria sp. (strain TM1040) (Silicibacter sp.).